We begin with the raw amino-acid sequence, 599 residues long: Mediator of RNA polymerase II transcription subunit 26 (599 aa).

One can recognise a TFIIS N-terminal domain in the interval 10–87 (QIRDRLLQAI…RSWQKLIEPV (78 aa)). 3 disordered regions span residues 98–331 (AGAP…RLEL), 352–403 (AGLG…RDYT), and 427–470 (FDPM…LQSP). A compositionally biased stretch (basic and acidic residues) spans 123-133 (SVHDLKYRNDM). Residues 174-191 (VPNSSPLPTNGISGSPES) are compositionally biased toward polar residues. The span at 207-218 (NRLEHGENDKHS) shows a compositional bias: basic and acidic residues. Pro residues predominate over residues 314–324 (SPLPLAQPSTP). Basic and acidic residues predominate over residues 441-463 (EPVRADSPVHTEQPRTELDKPEA). Residues S447 and S469 each carry the phosphoserine modification.

The protein belongs to the Mediator complex subunit 26 family. In terms of assembly, component of the Mediator complex, which is composed of MED1, MED4, MED6, MED7, MED8, MED9, MED10, MED11, MED12, MED13, MED13L, MED14, MED15, MED16, MED17, MED18, MED19, MED20, MED21, MED22, MED23, MED24, MED25, MED26, MED27, MED29, MED30, MED31, CCNC, CDK8 and CDC2L6/CDK11. The MED12, MED13, CCNC and CDK8 subunits form a distinct module termed the CDK8 module. Mediator containing the CDK8 module is less active than Mediator lacking this module in supporting transcriptional activation. Individual preparations of the Mediator complex lacking one or more distinct subunits have been variously termed ARC, CRSP, DRIP, PC2, SMCC and TRAP. Interacts with CEBPB (when not methylated).

Its subcellular location is the nucleus. Functionally, component of the Mediator complex, a coactivator involved in the regulated transcription of nearly all RNA polymerase II-dependent genes. Mediator functions as a bridge to convey information from gene-specific regulatory proteins to the basal RNA polymerase II transcription machinery. Mediator is recruited to promoters by direct interactions with regulatory proteins and serves as a scaffold for the assembly of a functional pre-initiation complex with RNA polymerase II and the general transcription factors. The sequence is that of Mediator of RNA polymerase II transcription subunit 26 (MED26) from Bos taurus (Bovine).